The sequence spans 255 residues: 5'-nucleotidase SurE (255 aa).

A divalent metal cation-binding residues include Asp8, Asp9, Ser40, and Asn92.

Belongs to the SurE nucleotidase family. It depends on a divalent metal cation as a cofactor.

The protein resides in the cytoplasm. The enzyme catalyses a ribonucleoside 5'-phosphate + H2O = a ribonucleoside + phosphate. Functionally, nucleotidase that shows phosphatase activity on nucleoside 5'-monophosphates. The chain is 5'-nucleotidase SurE from Brucella canis (strain ATCC 23365 / NCTC 10854 / RM-666).